A 177-amino-acid polypeptide reads, in one-letter code: Myosin regulatory light chain 2 (177 aa).

Residues 1–16 (MSRKSGSRSSSKRSKK) show a composition bias toward basic residues. The disordered stretch occupies residues 1 to 24 (MSRKSGSRSSSKRSKKSGGGSNVF). IgE-binding epitope stretches follow at residues 13 to 30 (RSKK…FTQR), 22 to 48 (NVFD…DKDG), 49 to 66 (VIGK…GRIA), 58 to 90 (TFDE…LLNM), 79 to 99 (PAPI…TGES), and 118 to 141 (NIDC…QEAD). The 36-residue stretch at 30–65 (RQVAEFKEGFQLMDRDKDGVIGKTDLRGTFDEIGRI) folds into the EF-hand 1 domain. D43, D45, D47, and D54 together coordinate Ca(2+). Positions 135-170 (FSSQEADDALDQMDIDDGGKIDVQGVIQMLTAGGGD) constitute an EF-hand 2 domain.

As to quaternary structure, myosin is a hexamer of 2 heavy chains and 4 light chains. As to expression, expressed in tail muscle (at protein level).

This chain is Myosin regulatory light chain 2, found in Penaeus vannamei (Whiteleg shrimp).